A 720-amino-acid chain; its full sequence is ATP-dependent DNA helicase Hel308 (720 aa).

ATP contacts are provided by residues S23, Q28, and 46–53 (IPTASGKT). One can recognise a Helicase ATP-binding domain in the interval 33-197 (KSGILEGKNA…WLNAELIVSD (165 aa)). Residues 145–148 (DEIH) carry the DEAH box motif. The 194-residue stretch at 229-422 (LVYDAIRKKK…NLRSQVLALI (194 aa)) folds into the Helicase C-terminal domain.

It belongs to the helicase family. Hel308 subfamily. Monomer. Interacts with PCNA. The cofactor is Mg(2+). Zn(2+) is required as a cofactor.

It carries out the reaction Couples ATP hydrolysis with the unwinding of duplex DNA by translocating in the 3'-5' direction.. The enzyme catalyses ATP + H2O = ADP + phosphate + H(+). Its function is as follows. DNA-dependent ATPase and 3'-5' DNA helicase that may be involved in repair of stalled replication forks. Unwinds the lagging strand from forked DNA structures in a 3'-5' direction. PCNA, the DNA polymerase sliding clamp subunit, stimulates the helicase activity, and may alter substrate specificity. Unwinds branched DNA (Holliday junctions) in an ATP-dependent fashion; ss- and dsDNA stimulate ATPase to the greatest extent, although it preferentially binds DNA with a single-stranded region. Processes a RecA-mediated recombination intermediate between gapped circular and homologous linear dsDNA. The polypeptide is ATP-dependent DNA helicase Hel308 (Pyrococcus furiosus (strain ATCC 43587 / DSM 3638 / JCM 8422 / Vc1)).